A 175-amino-acid chain; its full sequence is MSANHTRMIDLSKFAEAKNAALLTFCSVWMGAIITLLRSPDELPLGFDYAFKASLTVLFIAAIISLKSLMPKFLNQVHKREDEYKNLLYFGDIDQIGTGAYPGMAADLYTPTEGASATPTYLHDLAVQTAIHAKIAHRKFRLFNWAGSLVLFAFGIMMVPPILFCIRWAVNRLHC.

A run of 3 helical transmembrane segments spans residues 17–37 (AKNA…ITLL), 44–64 (PLGF…AAII), and 146–166 (AGSL…LFCI).

It is found in the cell inner membrane. Its function is as follows. Pycsar (pyrimidine cyclase system for antiphage resistance) provides immunity against bacteriophage. The pyrimidine cyclase (PycC) synthesizes cyclic nucleotides in response to infection; these serve as specific second messenger signals. The signals activate the nearby effector, leading to bacterial cell death and abortive phage infection. A clade A Pycsar system. The effector gene of a two-gene Pycsar system. Expression of this and uridylate cyclase RsPycC (AC A0A4R2TZQ0) probably confers resistance to bacteriophage. The genes are probably only expressed in response to bacteriophage infection. Probably only responds to cUMP (produced by its cognate NTP cyclase), acts by impairing membrane integrity. The sequence is that of Pycsar effector protein RsPycTM from Rhizobium sp. (strain PP-F2F-G36).